The chain runs to 525 residues: Ubiquitin carboxyl-terminal hydrolase 22 (525 aa).

A UBP-type zinc finger spans residues 21 to 138 (PGCSHLGSFK…KEEQRKAWKM (118 aa)). Zn(2+)-binding residues include C23, H25, C63, C66, C76, C79, C84, H89, H93, H99, C112, and C115. Residue K129 is modified to N6-acetyllysine. The residue at position 147 (T147) is a Phosphothreonine. Positions 176–520 (RGLINLGNTC…EGYLLFYHKQ (345 aa)) constitute a USP domain. The active-site Nucleophile is C185. S237 carries the post-translational modification Phosphoserine. Residue H479 is the Proton acceptor of the active site.

It belongs to the peptidase C19 family. UBP8 subfamily. As to quaternary structure, component of some SAGA transcription coactivator-HAT complexes, at least composed of ATXN7, ATXN7L3, ENY2, GCN5L2, SUPT3H, TAF10, TRRAP and USP22. Within the SAGA complex, ATXN7L3, ENY2 and USP22 form a subcomplex required for histone deubiquitination. Interacts directly with ATXN7L3; leading to its recruitment to the SAGA complex. Interacts with ATXN7L3 and weakly with ATXN7L3B. Interacts with MED1. Post-translationally, phosphorylated in G2/M phase, but not in G1 phase by CDK1. In terms of processing, ubiquitinated and subsequently degraded in a CDC20-dependent manner. In terms of tissue distribution, highly expressed in brain and weakly in other organs.

Its subcellular location is the nucleus. It is found in the cytoplasm. The enzyme catalyses Thiol-dependent hydrolysis of ester, thioester, amide, peptide and isopeptide bonds formed by the C-terminal Gly of ubiquitin (a 76-residue protein attached to proteins as an intracellular targeting signal).. Functionally, deubiquitinase that plays a role in several cellular processes including transcriptional regulation, cell cycle progression or innate immunity. As part of the transcription regulatory histone acetylation (HAT) complex SAGA, catalyzes the deubiquitination of both histones H2A and H2B, thereby acting as a transcriptional coactivator. Recruited to specific gene promoters by activators such as MYC, where it is required for transcription. Facilitates cell-cycle progression by stabilizing CCNB1 and antagonizing its proteasome-mediated degradation in a cell cycle-specific manner. Modulates cell cycle progression and apoptosis also by antagonizing TP53 transcriptional activation through deacetylase SIRT1 stabilization. Plays multiple roles in immunity and inflammation. Participates in antiviral response by deubiquitinating the importin KPNA2, leading to IRF3 nuclear translocation and subsequent type I interferon production. Acts as a central regulator of type III IFN signaling by negatively regulating STING1 activation and ubiquitination. Inhibits NLRP3 inflammasome activation by promoting NLRP3 degradation through ATG5-dependent autophagy. Deubiquitinates CD274 to induce its stabilization and thereby participates in maintenance of immune tolerance to self. Controls necroptotic cell death by regulating RIPK3 phosphorylation and ubiquitination. During bacterial infection, promotes pro-inflammatory response by targeting TRAF6 and removing its 'Lys-48'-linked polyubiquitination. This Mus musculus (Mouse) protein is Ubiquitin carboxyl-terminal hydrolase 22 (Usp22).